We begin with the raw amino-acid sequence, 155 residues long: Ribosome maturation factor RimP (155 aa).

This sequence belongs to the RimP family.

Its subcellular location is the cytoplasm. Its function is as follows. Required for maturation of 30S ribosomal subunits. This is Ribosome maturation factor RimP from Prochlorococcus marinus (strain MIT 9312).